A 1012-amino-acid chain; its full sequence is Structural polyprotein (1012 aa).

Asp-30 contributes to the a divalent metal cation binding site. One can recognise a Peptidase S50 domain in the interval 513–755 (ADKGYEVVAN…AGRQYHLAMA (243 aa)). The active-site Nucleophile is Ser-652. Residue Lys-692 is part of the active site. The disordered stretch occupies residues 969-1012 (AMEMKHRNPRRALPKPKPKPNAPTQRPPGRLGRWIRTVSDEDLE). Basic residues predominate over residues 975–986 (RNPRRALPKPKP). Residues 1003–1012 (IRTVSDEDLE) are interaction with VP1 protein.

Homotrimer. A central divalent metal stabilizes the VP2 trimer. Interacts with host ITGA4/ITGB1. In terms of assembly, homodimer. Interacts (via C-terminus) with VP1 in the cytoplasm. Interacts with VP2. In terms of processing, specific enzymatic cleavages yield mature proteins. The capsid assembly seems to be regulated by polyprotein processing. The protease VP4 cleaves itself off the polyprotein, thus releasing pre-VP2 and VP3 within the infected cell. During capsid assembly, the C-terminus of pre-VP2 is further processed by VP4, giving rise to VP2, the external capsid protein and three small peptides that all stay closely associated with the capsid.

Its subcellular location is the virion. It is found in the host cytoplasm. In terms of biological role, capsid protein VP2 self assembles to form an icosahedral capsid with a T=13 symmetry, about 70 nm in diameter, and consisting of 260 VP2 trimers. The capsid encapsulates the genomic dsRNA. VP2 is also involved in attachment and entry into the host cell by interacting with host ITGA4/ITGB1. Its function is as follows. The precursor of VP2 plays an important role in capsid assembly. First, pre-VP2 and VP2 oligomers assemble to form a procapsid. Then, the pre-VP2 intermediates may be processed into VP2 proteins by proteolytic cleavage mediated by VP4 to obtain the mature virion. The final capsid is composed of pentamers and hexamers but VP2 has a natural tendency to assemble into all-pentameric structures. Therefore pre-VP2 may be required to allow formation of the hexameric structures. Functionally, protease VP4 is a serine protease that cleaves the polyprotein into its final products. Pre-VP2 is first partially cleaved, and may be completely processed by VP4 upon capsid maturation. Capsid protein VP3 plays a key role in virion assembly by providing a scaffold for the capsid made of VP2. May self-assemble to form a T=4-like icosahedral inner-capsid composed of at least 180 trimers. Plays a role in genomic RNA packaging by recruiting VP1 into the capsid and interacting with the dsRNA genome segments to form a ribonucleoprotein complex. Additionally, the interaction of the VP3 C-terminal tail with VP1 removes the inherent structural blockade of the polymerase active site. Thus, VP3 can also function as a transcriptional activator. In terms of biological role, structural peptide 1 is a small peptide derived from pre-VP2 C-terminus. It destabilizes and perforates cell membranes, suggesting a role during entry. Its function is as follows. Structural peptide 2 is a small peptide derived from pVP2 C-terminus. It is not essential for the virus viability, but viral growth is affected when missing. Functionally, structural peptide 3 is a small peptide derived from pVP2 C-terminus. It is not essential for the virus viability, but viral growth is affected when missing. Structural peptide 4 is a small peptide derived from pVP2 C-terminus. It is essential for the virus viability. This chain is Structural polyprotein, found in Avian infectious bursal disease virus (strain Cu-1) (IBDV).